We begin with the raw amino-acid sequence, 342 residues long: Polygalacturonase inhibitor 2 (342 aa).

The first 29 residues, 1-29, serve as a signal peptide directing secretion; that stretch reads MTQFNIPVTMSSSLSIILVILVSLSTAHS. 2 disulfides stabilise this stretch: Cys-32/Cys-62 and Cys-63/Cys-72. Asn-64 is a glycosylation site (N-linked (GlcNAc...) (complex) asparagine). 10 LRR repeats span residues 82–107, 108–132, 133–156, 157–180, 181–205, 206–228, 229–252, 253–275, 276–299, and 300–319; these read NNLD…LPYL, NFLY…LTQL, HYLY…IKTL, VTLD…LPNL, VGIT…SKLF, TSMT…NLNL, AFVD…DKNT, QKIH…SKNL, NGLD…LKFL, and HSLN…GGNL. A glycan (N-linked (GlcNAc...) (complex) asparagine) is linked at Asn-141. Asn-303 carries an N-linked (GlcNAc...) asparagine glycan. 2 cysteine pairs are disulfide-bonded: Cys-310/Cys-332 and Cys-334/Cys-341.

The protein belongs to the polygalacturonase-inhibiting protein family. Asn-303 is not glycosylated.

Its subcellular location is the secreted. The protein localises to the cell wall. The protein resides in the membrane. Functionally, inhibitor of fungal polygalacturonase. It is an important factor for plant resistance to phytopathogenic fungi. Inhibits all polygalacturonases (PG) tested, with the exception of PG from F.oxysporum which was only inhibited at 60%. This chain is Polygalacturonase inhibitor 2 (PGIP2), found in Phaseolus vulgaris (Kidney bean).